The primary structure comprises 213 residues: Bacteriochlorophyll synthase 23 kDa chain (213 aa).

It participates in porphyrin-containing compound metabolism; bacteriochlorophyll biosynthesis (light-independent). The polypeptide is Bacteriochlorophyll synthase 23 kDa chain (bchJ) (Rhodobacter capsulatus (strain ATCC BAA-309 / NBRC 16581 / SB1003)).